The chain runs to 473 residues: Glutamyl-tRNA reductase (473 aa).

Residues 49–52 (TCNR), serine 109, 114–116 (EQQ), and glutamine 120 contribute to the substrate site. Cysteine 50 (nucleophile) is an active-site residue. 189–194 (GAGSMG) is a binding site for NADP(+). The segment at 445-473 (SGLDAGSGPQGADGPSAGPTPSAPNPSAE) is disordered.

This sequence belongs to the glutamyl-tRNA reductase family. As to quaternary structure, homodimer.

The enzyme catalyses (S)-4-amino-5-oxopentanoate + tRNA(Glu) + NADP(+) = L-glutamyl-tRNA(Glu) + NADPH + H(+). It functions in the pathway porphyrin-containing compound metabolism; protoporphyrin-IX biosynthesis; 5-aminolevulinate from L-glutamyl-tRNA(Glu): step 1/2. Its function is as follows. Catalyzes the NADPH-dependent reduction of glutamyl-tRNA(Glu) to glutamate 1-semialdehyde (GSA). In Mycobacterium ulcerans (strain Agy99), this protein is Glutamyl-tRNA reductase.